A 330-amino-acid polypeptide reads, in one-letter code: Glycerol-3-phosphate dehydrogenase [NAD(P)+] (330 aa).

The NADPH site is built by tryptophan 11, arginine 33, and lysine 105. Sn-glycerol 3-phosphate contacts are provided by lysine 105, glycine 133, and serine 135. Alanine 137 contacts NADPH. Sn-glycerol 3-phosphate is bound by residues lysine 188, aspartate 241, serine 251, arginine 252, and asparagine 253. Lysine 188 acts as the Proton acceptor in catalysis. Residue arginine 252 participates in NADPH binding. Residues valine 276 and glutamate 278 each coordinate NADPH.

This sequence belongs to the NAD-dependent glycerol-3-phosphate dehydrogenase family.

It is found in the cytoplasm. It catalyses the reaction sn-glycerol 3-phosphate + NAD(+) = dihydroxyacetone phosphate + NADH + H(+). The catalysed reaction is sn-glycerol 3-phosphate + NADP(+) = dihydroxyacetone phosphate + NADPH + H(+). Its pathway is membrane lipid metabolism; glycerophospholipid metabolism. Functionally, catalyzes the reduction of the glycolytic intermediate dihydroxyacetone phosphate (DHAP) to sn-glycerol 3-phosphate (G3P), the key precursor for phospholipid synthesis. This is Glycerol-3-phosphate dehydrogenase [NAD(P)+] from Acidovorax sp. (strain JS42).